Consider the following 70-residue polypeptide: Sec-independent protein translocase protein TatA (70 aa).

A helical transmembrane segment spans residues 1-21; the sequence is MFGLGGQELLLILLIILLLFG. The interval 47-70 is disordered; sequence EDEFNKAMSDPPEKKEKESPSDKG. Residues 57-70 show a composition bias toward basic and acidic residues; that stretch reads PPEKKEKESPSDKG.

The protein belongs to the TatA/E family. Forms a complex with TatC.

The protein resides in the cell inner membrane. In terms of biological role, part of the twin-arginine translocation (Tat) system that transports large folded proteins containing a characteristic twin-arginine motif in their signal peptide across membranes. TatA could form the protein-conducting channel of the Tat system. The sequence is that of Sec-independent protein translocase protein TatA from Prosthecochloris aestuarii (strain DSM 271 / SK 413).